Here is a 653-residue protein sequence, read N- to C-terminus: Dual specificity protein kinase shkB (653 aa).

The interval 112 to 133 (NPNNNNNNSNNTNSSDSNQNYS) is disordered. A Protein kinase domain is found at 174-432 (YNREAKLGSG…FAEISKQRIL (259 aa)). ATP-binding positions include 180–188 (LGSGAFGSV) and Lys201. Asp298 serves as the catalytic Proton acceptor. Residues 534 to 625 (GFMAATSSKN…IKEPFEGGPF (92 aa)) enclose the SH2 domain.

The protein belongs to the protein kinase superfamily. TKL Ser/Thr protein kinase family. SH2 domain-containing protein kinase subfamily.

The protein localises to the membrane. It carries out the reaction L-seryl-[protein] + ATP = O-phospho-L-seryl-[protein] + ADP + H(+). The enzyme catalyses L-threonyl-[protein] + ATP = O-phospho-L-threonyl-[protein] + ADP + H(+). Its function is as follows. Required for proper chemotaxis and phagocytosis; proper spatiotemporal control of F-actin levels in chemotaxing cells. Negative regulator of the PI3K (phosphatidylinositol 3 kinase) pathway. Predominantly phosphorylates serines and threonines and tyrosines at a lower level. The sequence is that of Dual specificity protein kinase shkB (shkB) from Dictyostelium discoideum (Social amoeba).